A 74-amino-acid chain; its full sequence is Protein SOM1, mitochondrial (74 aa).

As to quaternary structure, component of the mitochondrial inner membrane peptidase (IMP) complex which at least consists of IMP1, IMP2 and SOM1.

The protein localises to the mitochondrion inner membrane. Its function is as follows. Non-catalytic component of the mitochondrial inner membrane peptidase (IMP) complex. IMP catalyzes the removal of signal peptides required for the targeting of proteins from the mitochondrial matrix, across the inner membrane, into the inter-membrane space. SOM1 facilitates cleavage of a subset of IMP substrates. The chain is Protein SOM1, mitochondrial (SOM1) from Saccharomyces cerevisiae (strain ATCC 204508 / S288c) (Baker's yeast).